We begin with the raw amino-acid sequence, 285 residues long: uncharacterized protein (285 aa).

A substrate-binding site is contributed by Ser-168. Catalysis depends on Tyr-181, which acts as the Proton acceptor.

The protein belongs to the short-chain dehydrogenases/reductases (SDR) family.

This is an uncharacterized protein from Haemophilus influenzae (strain ATCC 51907 / DSM 11121 / KW20 / Rd).